The primary structure comprises 2327 residues: Voltage-dependent N-type calcium channel subunit alpha-1B (2327 aa).

The disordered stretch occupies residues 1 to 37 (MVRFGDELGGRYGGTGGGERARGGGAGGAGGPGQGGL). Residues 1 to 90 (MVRFGDELGG…DNVVRKYAKR (90 aa)) lie on the Cytoplasmic side of the membrane. Residues 10–37 (GRYGGTGGGERARGGGAGGAGGPGQGGL) show a composition bias toward gly residues. Residue Arg-22 is modified to Omega-N-methylarginine. One copy of the I repeat lies at 82–359 (NVVRKYAKRI…LVLGVLSGEF (278 aa)). Residues 91–114 (ITEWPPFEYMILATIIANCIVLAL) form a helical membrane-spanning segment. Residues 115–131 (EQHLPDGDKTPMSERLD) are Extracellular-facing. Residues 132–152 (DTEPYFIGIFCFEAGIKIIAL) form a helical membrane-spanning segment. Residues 153–163 (GFVFHKGSYLR) lie on the Cytoplasmic side of the membrane. Residues 164 to 182 (NGWNVMDFVVVLTGILATA) form a helical membrane-spanning segment. Residues 183-187 (GTDFD) lie on the Extracellular side of the membrane. Residues 188–211 (LRTLRAVRVLRPLKLVSGIPSLQV) traverse the membrane as a helical segment. At 212–221 (VLKSIMKAMV) the chain is on the cytoplasmic side. A helical transmembrane segment spans residues 222 to 244 (PLLQIGLLLFFAILMFAIIGLEF). Over 245–331 (YMGKFHKACF…NTNDAAGNTW (87 aa)) the chain is Extracellular. Asn-256 is a glycosylation site (N-linked (GlcNAc...) asparagine). The chain crosses the membrane as a helical span at residues 332–356 (NWLYFIPLIIIGSFFMLNLVLGVLS). Residues 357–482 (GEFAKERERV…FFIRRMVKAQ (126 aa)) lie on the Cytoplasmic side of the membrane. The binding to the beta subunit stretch occupies residues 379–396 (QQIERELNGYLEWIFKAE). At Ser-411 the chain carries Phosphoserine. 451–458 (ASLKSGKT) is a binding site for ATP. The II repeat unit spans residues 468-712 (EKMFRFFIRR…VFLAIAVDNL (245 aa)). A helical transmembrane segment spans residues 483–501 (SFYWVVLCVVALNTLCVAM). Residues 502 to 511 (VHYNQPQRLT) lie on the Extracellular side of the membrane. The chain crosses the membrane as a helical span at residues 512–534 (TALYFAEFVFLGLFLTEMSLKMY). The Cytoplasmic segment spans residues 535-544 (GLGPRSYFRS). Ser-544 lines the a 1,2-diacyl-sn-glycero-3-phospho-(1D-myo-inositol-4,5-bisphosphate) pocket. A helical membrane pass occupies residues 545–566 (SFNCFDFGVIVGSIFEVVWAAI). Topologically, residues 567–573 (KPGTSFG) are extracellular. Residues 574-586 (ISVLRALRLLRIF) traverse the membrane as a helical segment. Residues Arg-584 and Lys-587 each contribute to the a 1,2-diacyl-sn-glycero-3-phospho-(1D-myo-inositol-4,5-bisphosphate) site. Topologically, residues 587 to 604 (KVTKYWNSLRNLVVSLLN) are cytoplasmic. The chain crosses the membrane as a helical span at residues 605-630 (SMKSIISLLFLLFLFIVVFALLGMQL). Residues 631–682 (FGGQFNFQDETPTTNFDTFPAAILTVFQILTGEDWNAVMYHGIESQGGVSKG) are Extracellular-facing. A helical membrane pass occupies residues 683–709 (MFSSFYFIVLTLFGNYTLLNVFLAIAV). The Cytoplasmic segment spans residues 710-1140 (DNLANAQELT…FCHYIVTMRY (431 aa)). Phosphoserine is present on residues Ser-745, Ser-748, and Ser-783. Disordered regions lie at residues 802-1015 (TRHV…KEPH) and 1042-1066 (EQPE…PSTT). Basic and acidic residues-rich tracts occupy residues 805 to 826 (VRPD…RDGL), 869 to 885 (EQDR…EERA), 914 to 924 (GSPEEATEREP), 961 to 972 (GPREAENNEEPT), and 988 to 1015 (PERE…KEPH). Over residues 1050–1066 (QRNVTRMGSQPSDPSTT) the composition is skewed to polar residues. Residue Ser-1058 is modified to Phosphoserine. The stretch at 1126–1412 (NLLRRFCHYI…IFVALIIITF (287 aa)) is one III repeat. A helical transmembrane segment spans residues 1141-1159 (FEMVILVVIALSSIALAAE). Residues 1160–1167 (DPVRTDSF) lie on the Extracellular side of the membrane. The chain crosses the membrane as a helical span at residues 1168-1192 (RNNALKYMDYIFTGVFTFEMVIKMI). The Cytoplasmic segment spans residues 1193–1206 (DLGLLLHPGAYFRD). Residues 1207–1231 (LWNILDFIVVSGALVAFAFSSFMGG) traverse the membrane as a helical segment. Topologically, residues 1232–1237 (SKGKDI) are extracellular. The chain crosses the membrane as a helical span at residues 1238–1258 (NTIKSLRVLRVLRPLKTIKRL). At 1259–1276 (PKLKAVFDCVVNSLKNVL) the chain is on the cytoplasmic side. Residues 1277–1296 (NILIVYMLFMFIFAVIAVQL) traverse the membrane as a helical segment. Residues 1297–1383 (FKGKFFYCTD…EQGPSPGFRM (87 aa)) lie on the Extracellular side of the membrane. The chain crosses the membrane as a helical span at residues 1384–1409 (ELSIFYVVYFVVFPFFFVNIFVALII). At 1410 to 1464 (ITFQEQGDKVMSECSLEKNERACIDFAISAKPLTRYMPQNKQSFQYKTWTFVVSP) the chain is on the cytoplasmic side. One copy of the IV repeat lies at 1449 to 1702 (NKQSFQYKTW…LFVAVIMDNF (254 aa)). Residues 1465 to 1483 (PFEYFIMAMIALNTVVLMM) traverse the membrane as a helical segment. The Extracellular portion of the chain corresponds to 1484-1491 (KFYDAPYE). Residues 1492–1516 (YELMLKCLNIVFTSMFSMECILKII) form a helical membrane-spanning segment. Residues 1517–1526 (AFGVLNYFRD) are Cytoplasmic-facing. The helical transmembrane segment at 1527–1548 (AWNVFDFVTVLGSITDILVTEI) threads the bilayer. At 1549 to 1554 (ANNFIN) the chain is on the extracellular side. Asn-1554 carries an N-linked (GlcNAc...) asparagine glycan. Residues 1555–1573 (LSFLRLFRAARLIKLLRQG) traverse the membrane as a helical segment. The Cytoplasmic segment spans residues 1574 to 1592 (YTIRILLWTFVQSFKALPY). The helical transmembrane segment at 1593–1612 (VCLLIAMLFFIYAIIGMQVF) threads the bilayer. The Extracellular segment spans residues 1613-1674 (GNIALDDDTS…ANASECGSDF (62 aa)). N-linked (GlcNAc...) asparagine glycosylation is present at Asn-1666. The chain crosses the membrane as a helical span at residues 1675-1698 (AYFYFVSFIFLCSFLMLNLFVAVI). The Cytoplasmic portion of the chain corresponds to 1699 to 2327 (MDNFEYLTRD…YHHPDQDHWC (629 aa)). In terms of domain architecture, EF-hand spans 1715-1750 (HHLDEFIRVWAEYDPAACGRISYNDMFEMLKHMSPP). Residues Asp-1728, Arg-1734, and Asp-1739 each coordinate Ca(2+). The segment at 1972–2193 (TLRGPDGEPQ…TPRPSITYKT (222 aa)) is disordered. Over residues 2039–2053 (SHHHHHRCHRRRDKK) the composition is skewed to basic residues. Ser-2056 is modified (phosphoserine). Residues 2088-2104 (CRRDRKQERGRSQERRQ) are compositionally biased toward basic and acidic residues. Composition is skewed to polar residues over residues 2131-2141 (PSLSSHPTSPT) and 2152-2168 (GSGS…SGAS). Residues Ser-2212, Ser-2221, and Ser-2244 each carry the phosphoserine modification. Disordered regions lie at residues 2230 to 2249 (EPLS…PYLG) and 2273 to 2292 (ATNS…TSQS). Low complexity predominate over residues 2276–2292 (SGRSSRTSYVSSLTSQS).

This sequence belongs to the calcium channel alpha-1 subunit (TC 1.A.1.11) family. CACNA1B subfamily. In terms of assembly, multisubunit complex consisting of alpha-1, alpha-2, beta and delta subunits in a 1:1:1:1 ratio. The channel activity is directed by the pore-forming and voltage-sensitive alpha-1 subunit. In many cases, this subunit is sufficient to generate voltage-sensitive calcium channel activity. The auxiliary subunits beta and alpha-2/delta linked by a disulfide bridge regulate the channel activity. Interacts with RIMS1. Interacts with FMR1 (via C-terminus); this interaction induces a decrease in the number of presynaptic functional CACNA1B channels at the cell surface. Post-translationally, phosphorylated in vitro by CaM-kinase II, PKA, PKC and CGPK. As to expression, widespread expression throughout the brain. Highest levels in pyramidal cell layers C1, C2 and C3 of the hippocampus, in the dentate gyrus, in the cortex layers 2 et 4, in the subiculum and the habenula.

The protein localises to the membrane. The enzyme catalyses Ca(2+)(in) = Ca(2+)(out). With respect to regulation, is specifically blocked by omega-conotoxin GVIA. Is specifically blocked by omega-conotoxin MVIIA (ziconotide). Is insensitive to dihydropyridines (DHP). Voltage-sensitive calcium channels (VSCC) mediate the entry of calcium ions into excitable cells and are also involved in a variety of calcium-dependent processes, including muscle contraction, hormone or neurotransmitter release, gene expression, cell motility, cell division and cell death. This alpha-1B subunit gives rise to N-type calcium currents. N-type calcium channels belong to the 'high-voltage activated' (HVA) group. They are involved in pain signaling. Calcium channels containing alpha-1B subunit may play a role in directed migration of immature neurons. Mediates Ca(2+) release probability at hippocampal neuronal soma and synaptic terminals. This Mus musculus (Mouse) protein is Voltage-dependent N-type calcium channel subunit alpha-1B (Cacna1b).